The following is a 272-amino-acid chain: Large ribosomal subunit protein uL29m (272 aa).

3 disordered regions span residues methionine 1–glutamine 29, lysine 56–lysine 87, and alanine 227–leucine 272. Residues serine 17–glutamine 29 are compositionally biased toward low complexity. Composition is skewed to low complexity over residues alanine 227–glutamate 238 and proline 249–threonine 259. Polar residues predominate over residues isoleucine 260 to leucine 272.

Belongs to the universal ribosomal protein uL29 family. In terms of assembly, component of the mitochondrial large ribosomal subunit. Mature mitochondrial ribosomes consist of a small (37S) and a large (54S) subunit. The 37S subunit contains at least 33 different proteins and 1 molecule of RNA (15S). The 54S subunit contains at least 45 different proteins and 1 molecule of RNA (21S).

The protein localises to the mitochondrion. The chain is Large ribosomal subunit protein uL29m (MRPL4) from Chaetomium globosum (strain ATCC 6205 / CBS 148.51 / DSM 1962 / NBRC 6347 / NRRL 1970) (Soil fungus).